A 96-amino-acid polypeptide reads, in one-letter code: MNYVNILEKSKNFIELELVNDDHSLSNLIKEVLLSKKGVILASYGVEHPVLDPDTGRYISNPRIMLKTDAKTDAEKVLKEALKDIVDLCNKTLKEL.

This sequence belongs to the archaeal Rpo11/eukaryotic RPB11/RPC19 RNA polymerase subunit family. As to quaternary structure, part of the RNA polymerase complex.

Its subcellular location is the cytoplasm. The enzyme catalyses RNA(n) + a ribonucleoside 5'-triphosphate = RNA(n+1) + diphosphate. Functionally, DNA-dependent RNA polymerase (RNAP) catalyzes the transcription of DNA into RNA using the four ribonucleoside triphosphates as substrates. This chain is DNA-directed RNA polymerase subunit Rpo11, found in Methanococcus maripaludis (strain C6 / ATCC BAA-1332).